We begin with the raw amino-acid sequence, 301 residues long: Putative S-adenosyl-L-methionine-dependent methyltransferase MAP_3777 (301 aa).

Residues aspartate 126 and 155-156 (DL) contribute to the S-adenosyl-L-methionine site.

Belongs to the UPF0677 family.

Exhibits S-adenosyl-L-methionine-dependent methyltransferase activity. The polypeptide is Putative S-adenosyl-L-methionine-dependent methyltransferase MAP_3777 (Mycolicibacterium paratuberculosis (strain ATCC BAA-968 / K-10) (Mycobacterium paratuberculosis)).